Reading from the N-terminus, the 152-residue chain is Transcriptional regulator MraZ (152 aa).

SpoVT-AbrB domains are found at residues 5–52 (ASAI…PIHE) and 81–124 (AHEV…DEQS).

This sequence belongs to the MraZ family. In terms of assembly, forms oligomers.

Its subcellular location is the cytoplasm. The protein resides in the nucleoid. This Shewanella baltica (strain OS155 / ATCC BAA-1091) protein is Transcriptional regulator MraZ.